Reading from the N-terminus, the 116-residue chain is Propanediol dehydratase-reactivating factor small subunit (116 aa).

Position 31 (glutamate 31) interacts with Mg(2+).

Belongs to the DdrB/PduH family. As to quaternary structure, forms a heterotetramer PduG(2)/PduH(2). Requires Mg(2+) as cofactor.

It is found in the bacterial microcompartment. It carries out the reaction ATP + H2O = ADP + phosphate + H(+). It participates in polyol metabolism; 1,2-propanediol degradation. Small subunit of the propanediol dehydratase-reactivating factor (DDR), which reactivates suicidally inhibited adenosylcobalamin-dependent propanediol dehydratase (diol dehydratase, DDH) found in the bacterial microcompartment (BMC) dedicated to 1,2-propanediol (1,2-PD) degradation. Reactivates inactivated DDH in the presence of ATP, Mg(2+) and free adenosylcobalamin (AdoCbl), by mediating the exchange of the tightly bound damaged cofactor AdoCbl for a free intact one. In terms of biological role, the 1,2-PD-specific bacterial microcompartment (BMC) concentrates low levels of 1,2-PD catabolic enzymes, concentrates volatile reaction intermediates thus enhancing pathway flux and keeps the level of toxic, mutagenic propionaldehyde low. This chain is Propanediol dehydratase-reactivating factor small subunit, found in Salmonella typhimurium (strain LT2 / SGSC1412 / ATCC 700720).